Reading from the N-terminus, the 193-residue chain is dTTP/UTP pyrophosphatase (193 aa).

Asp71 functions as the Proton acceptor in the catalytic mechanism.

Belongs to the Maf family. YhdE subfamily. It depends on a divalent metal cation as a cofactor.

The protein localises to the cytoplasm. The enzyme catalyses dTTP + H2O = dTMP + diphosphate + H(+). It carries out the reaction UTP + H2O = UMP + diphosphate + H(+). Its function is as follows. Nucleoside triphosphate pyrophosphatase that hydrolyzes dTTP and UTP. May have a dual role in cell division arrest and in preventing the incorporation of modified nucleotides into cellular nucleic acids. This Dictyoglomus turgidum (strain DSM 6724 / Z-1310) protein is dTTP/UTP pyrophosphatase.